Consider the following 293-residue polypeptide: 4-hydroxy-tetrahydrodipicolinate synthase (293 aa).

Thr47 lines the pyruvate pocket. The Proton donor/acceptor role is filled by Tyr136. Lys164 acts as the Schiff-base intermediate with substrate in catalysis. Residue Ile206 participates in pyruvate binding.

It belongs to the DapA family. As to quaternary structure, homotetramer; dimer of dimers.

Its subcellular location is the cytoplasm. It catalyses the reaction L-aspartate 4-semialdehyde + pyruvate = (2S,4S)-4-hydroxy-2,3,4,5-tetrahydrodipicolinate + H2O + H(+). Its pathway is amino-acid biosynthesis; L-lysine biosynthesis via DAP pathway; (S)-tetrahydrodipicolinate from L-aspartate: step 3/4. Its function is as follows. Catalyzes the condensation of (S)-aspartate-beta-semialdehyde [(S)-ASA] and pyruvate to 4-hydroxy-tetrahydrodipicolinate (HTPA). This is 4-hydroxy-tetrahydrodipicolinate synthase from Listeria innocua serovar 6a (strain ATCC BAA-680 / CLIP 11262).